Reading from the N-terminus, the 179-residue chain is MAVLQKSMSFSLMGTLAASCLLLIALWAQEANALPVNTRCKLEVSNFQQPYIVNRTFMLAKEASLADNNTDVRLIGEKLFRGVSAKDQCYLMKQVLNFTLEDVLLPQSDRFQPYMQEVVPFLTKLSNQLSSCHISGDDQNIQKNVRRLKETVKKLGESGEIKAIGELDLLFMSLRNACV.

Positions 1–33 (MAVLQKSMSFSLMGTLAASCLLLIALWAQEANA) are cleaved as a signal peptide. Cystine bridges form between cysteine 40–cysteine 132 and cysteine 89–cysteine 178. N-linked (GlcNAc...) asparagine glycans are attached at residues asparagine 54, asparagine 68, and asparagine 97.

The protein belongs to the IL-10 family.

The protein localises to the secreted. Functionally, cytokine that plays a critical role in modulating tissue responses during inflammation. Plays an essential role in the regeneration of epithelial cells to maintain barrier function after injury and for the prevention of further tissue damage. Unlike most of the cytokines, has no effect on immune cells. Signals through a heterodimeric receptor composed of two subunits, the specific receptor IL22RA1 which is present on non-immune cells in many organs and the shared subunit IL10RB. Ligation of IL22RA1 with IL22 induces activation of the tyrosine kinases JAK1 and TYK2, which in turn activates STAT3. In turn, promotes cell survival and proliferation through STAT3, ERK1/2 and PI3K/AKT pathways. Promotes phosphorylation of GSK3B at 'Ser-9' and CTTN. Promotes epithelial cell spreading. The protein is Interleukin-22 (Il22) of Mus musculus (Mouse).